The following is a 366-amino-acid chain: DNA replication and repair protein RecF (366 aa).

Residue 30–37 (GRNAQGKT) participates in ATP binding.

The protein belongs to the RecF family.

The protein resides in the cytoplasm. Functionally, the RecF protein is involved in DNA metabolism; it is required for DNA replication and normal SOS inducibility. RecF binds preferentially to single-stranded, linear DNA. It also seems to bind ATP. The chain is DNA replication and repair protein RecF from Streptococcus thermophilus (strain CNRZ 1066).